The primary structure comprises 453 residues: Chromosomal replication initiator protein DnaA (453 aa).

The domain I, interacts with DnaA modulators stretch occupies residues 1–79 (MKSLIQEKWN…KTAIAEVINQ (79 aa)). The tract at residues 79–111 (QDFEIEFVLLSQTKAEEKVQTQAPNKIKNESLS) is domain II. Residues 112-330 (YLNPRYTFDT…GALTKIVALS (219 aa)) are domain III, AAA+ region. 4 residues coordinate ATP: Gly-156, Gly-158, Lys-159, and Thr-160. The segment at 331–453 (RLKKKEVDVI…VLIKKINPTP (123 aa)) is domain IV, binds dsDNA.

This sequence belongs to the DnaA family. In terms of assembly, oligomerizes as a right-handed, spiral filament on DNA at oriC.

It is found in the cytoplasm. Its function is as follows. Plays an essential role in the initiation and regulation of chromosomal replication. ATP-DnaA binds to the origin of replication (oriC) to initiate formation of the DNA replication initiation complex once per cell cycle. Binds the DnaA box (a 9 base pair repeat at the origin) and separates the double-stranded (ds)DNA. Forms a right-handed helical filament on oriC DNA; dsDNA binds to the exterior of the filament while single-stranded (ss)DNA is stabiized in the filament's interior. The ATP-DnaA-oriC complex binds and stabilizes one strand of the AT-rich DNA unwinding element (DUE), permitting loading of DNA polymerase. After initiation quickly degrades to an ADP-DnaA complex that is not apt for DNA replication. Binds acidic phospholipids. The sequence is that of Chromosomal replication initiator protein DnaA from Lachnoclostridium phytofermentans (strain ATCC 700394 / DSM 18823 / ISDg) (Clostridium phytofermentans).